We begin with the raw amino-acid sequence, 401 residues long: G2/mitotic-specific cyclin-B1 (401 aa).

Disordered regions lie at residues 1-30 (MALR…PTLK) and 84-103 (KVQV…ETSG). A compositionally biased stretch (polar residues) spans 9–26 (RLASTRAEQGGKTCSVSG).

The protein belongs to the cyclin family. Cyclin AB subfamily. In terms of assembly, interacts with the CDK1 protein kinase to form a serine/threonine kinase holoenzyme complex also known as maturation promoting factor (MPF). The cyclin subunit imparts substrate specificity to the complex.

In terms of biological role, essential for the control of the cell cycle at the G2/M (mitosis) transition. The sequence is that of G2/mitotic-specific cyclin-B1 (ccnb1) from Oryzias javanicus (Javanese ricefish).